Reading from the N-terminus, the 280-residue chain is Putative ABC transporter ATP-binding protein MTH_133 (280 aa).

An ABC transporter domain is found at Ile6–Arg241. Gly39–Ser46 is an ATP binding site.

Belongs to the ABC transporter superfamily.

The protein resides in the cell membrane. Probably part of an ABC transporter complex. Responsible for energy coupling to the transport system. The chain is Putative ABC transporter ATP-binding protein MTH_133 from Methanothermobacter thermautotrophicus (strain ATCC 29096 / DSM 1053 / JCM 10044 / NBRC 100330 / Delta H) (Methanobacterium thermoautotrophicum).